The sequence spans 289 residues: F-box protein PP2-B15 (289 aa).

The F-box domain maps to 1–43 (MMLPEACVATILSFTTPADTISSAAVSSVFRVAGDSDFVWEKF).

The protein is F-box protein PP2-B15 (PP2B15) of Arabidopsis thaliana (Mouse-ear cress).